The chain runs to 417 residues: D-amino acid dehydrogenase (417 aa).

Position 3-17 (3-17 (IVVLGGGVVGVTSAW)) interacts with FAD.

This sequence belongs to the DadA oxidoreductase family. FAD serves as cofactor.

It catalyses the reaction a D-alpha-amino acid + A + H2O = a 2-oxocarboxylate + AH2 + NH4(+). The protein operates within amino-acid degradation; D-alanine degradation; NH(3) and pyruvate from D-alanine: step 1/1. In terms of biological role, oxidative deamination of D-amino acids. The polypeptide is D-amino acid dehydrogenase (Aeromonas salmonicida (strain A449)).